We begin with the raw amino-acid sequence, 599 residues long: Potassium-transporting ATPase potassium-binding subunit (599 aa).

The next 12 helical transmembrane spans lie at 8–28 (LLAL…IWLA), 61–81 (WQYA…VYAL), 133–153 (ALAV…FALF), 176–196 (AWLL…NGVI), 280–300 (LTNF…CFAF), 311–331 (WAVL…ITPA), 366–386 (INAS…AVIA), 391–411 (FTPL…VVFG), 416–436 (GLYG…LMIG), 456–476 (IAIL…VLAG), 521–541 (LLGL…LAIA), and 563–583 (LFVL…YVPA).

Belongs to the KdpA family. The system is composed of three essential subunits: KdpA, KdpB and KdpC.

It is found in the cell inner membrane. Part of the high-affinity ATP-driven potassium transport (or Kdp) system, which catalyzes the hydrolysis of ATP coupled with the electrogenic transport of potassium into the cytoplasm. This subunit binds the periplasmic potassium ions and delivers the ions to the membrane domain of KdpB through an intramembrane tunnel. This chain is Potassium-transporting ATPase potassium-binding subunit, found in Polaromonas naphthalenivorans (strain CJ2).